The following is a 305-amino-acid chain: Sulfate adenylyltransferase subunit 2 (305 aa).

This sequence belongs to the PAPS reductase family. CysD subfamily. Heterodimer composed of CysD, the smaller subunit, and CysN.

It catalyses the reaction sulfate + ATP + H(+) = adenosine 5'-phosphosulfate + diphosphate. It functions in the pathway sulfur metabolism; hydrogen sulfide biosynthesis; sulfite from sulfate: step 1/3. With CysN forms the ATP sulfurylase (ATPS) that catalyzes the adenylation of sulfate producing adenosine 5'-phosphosulfate (APS) and diphosphate, the first enzymatic step in sulfur assimilation pathway. APS synthesis involves the formation of a high-energy phosphoric-sulfuric acid anhydride bond driven by GTP hydrolysis by CysN coupled to ATP hydrolysis by CysD. This Pseudomonas entomophila (strain L48) protein is Sulfate adenylyltransferase subunit 2.